We begin with the raw amino-acid sequence, 217 residues long: ATP-dependent Clp protease proteolytic subunit (217 aa).

The Nucleophile role is filled by Ser-121. Residue His-146 is part of the active site.

Belongs to the peptidase S14 family. In terms of assembly, fourteen ClpP subunits assemble into 2 heptameric rings which stack back to back to give a disk-like structure with a central cavity, resembling the structure of eukaryotic proteasomes.

The protein resides in the cytoplasm. It carries out the reaction Hydrolysis of proteins to small peptides in the presence of ATP and magnesium. alpha-casein is the usual test substrate. In the absence of ATP, only oligopeptides shorter than five residues are hydrolyzed (such as succinyl-Leu-Tyr-|-NHMec, and Leu-Tyr-Leu-|-Tyr-Trp, in which cleavage of the -Tyr-|-Leu- and -Tyr-|-Trp bonds also occurs).. Functionally, cleaves peptides in various proteins in a process that requires ATP hydrolysis. Has a chymotrypsin-like activity. Plays a major role in the degradation of misfolded proteins. This is ATP-dependent Clp protease proteolytic subunit from Burkholderia vietnamiensis (strain G4 / LMG 22486) (Burkholderia cepacia (strain R1808)).